A 452-amino-acid polypeptide reads, in one-letter code: Phenylalanine-4-hydroxylase (452 aa).

Serine 16 carries the phosphoserine; by PKA modification. Positions 36–114 constitute an ACT domain; sequence SLIFSLKEEV…TVHELSRDKK (79 aa). Fe cation-binding residues include histidine 285, histidine 290, and glutamate 330.

The protein belongs to the biopterin-dependent aromatic amino acid hydroxylase family. As to quaternary structure, homodimer and homotetramer. Requires Fe(2+) as cofactor. In terms of processing, phosphorylation at Ser-16 increases basal activity and facilitates activation by the substrate phenylalanine.

It catalyses the reaction (6R)-L-erythro-5,6,7,8-tetrahydrobiopterin + L-phenylalanine + O2 = (4aS,6R)-4a-hydroxy-L-erythro-5,6,7,8-tetrahydrobiopterin + L-tyrosine. It functions in the pathway amino-acid degradation; L-phenylalanine degradation; acetoacetate and fumarate from L-phenylalanine: step 1/6. Its activity is regulated as follows. N-terminal region of PAH is thought to contain allosteric binding sites for phenylalanine and to constitute an 'inhibitory' domain that regulates the activity of a catalytic domain in the C-terminal portion of the molecule. Functionally, catalyzes the hydroxylation of L-phenylalanine to L-tyrosine. This chain is Phenylalanine-4-hydroxylase (PAH), found in Homo sapiens (Human).